Here is a 265-residue protein sequence, read N- to C-terminus: NAD kinase (265 aa).

Aspartate 45 acts as the Proton acceptor in catalysis. Residues 45-46, 121-122, arginine 147, aspartate 149, alanine 184, and glutamine 221 each bind NAD(+); these read DG and NE.

This sequence belongs to the NAD kinase family. The cofactor is a divalent metal cation.

It is found in the cytoplasm. It carries out the reaction NAD(+) + ATP = ADP + NADP(+) + H(+). Its function is as follows. Involved in the regulation of the intracellular balance of NAD and NADP, and is a key enzyme in the biosynthesis of NADP. Catalyzes specifically the phosphorylation on 2'-hydroxyl of the adenosine moiety of NAD to yield NADP. The chain is NAD kinase from Leuconostoc citreum (strain KM20).